We begin with the raw amino-acid sequence, 240 residues long: Peptidyl-tRNA hydrolase 2 (240 aa).

Position 60 (tyrosine 60) interacts with tRNA. The active-site Proton acceptor is histidine 65. The tRNA site is built by tyrosine 111, asparagine 113, and asparagine 159.

It belongs to the PTH family. As to quaternary structure, monomer.

The protein localises to the cytoplasm. It catalyses the reaction an N-acyl-L-alpha-aminoacyl-tRNA + H2O = an N-acyl-L-amino acid + a tRNA + H(+). Functionally, hydrolyzes ribosome-free peptidyl-tRNAs (with 1 or more amino acids incorporated), which drop off the ribosome during protein synthesis, or as a result of ribosome stalling. Its function is as follows. Catalyzes the release of premature peptidyl moieties from peptidyl-tRNA molecules trapped in stalled 50S ribosomal subunits, and thus maintains levels of free tRNAs and 50S ribosomes. The polypeptide is Peptidyl-tRNA hydrolase 2 (Corynebacterium jeikeium (strain K411)).